A 158-amino-acid chain; its full sequence is Transcription elongation factor GreA (158 aa).

It belongs to the GreA/GreB family.

Necessary for efficient RNA polymerase transcription elongation past template-encoded arresting sites. The arresting sites in DNA have the property of trapping a certain fraction of elongating RNA polymerases that pass through, resulting in locked ternary complexes. Cleavage of the nascent transcript by cleavage factors such as GreA or GreB allows the resumption of elongation from the new 3'terminus. GreA releases sequences of 2 to 3 nucleotides. In Rhizobium etli (strain ATCC 51251 / DSM 11541 / JCM 21823 / NBRC 15573 / CFN 42), this protein is Transcription elongation factor GreA.